Consider the following 108-residue polypeptide: Thioredoxin (108 aa).

Residues 2 to 108 (NKIIELTDQN…LKDFLDENIK (107 aa)) enclose the Thioredoxin domain. The cysteines at positions 32 and 35 are disulfide-linked.

The protein belongs to the thioredoxin family.

Participates in various redox reactions through the reversible oxidation of its active center dithiol to a disulfide and catalyzes dithiol-disulfide exchange reactions. The chain is Thioredoxin (trxA) from Buchnera aphidicola subsp. Schizaphis graminum (strain Sg).